The following is a 194-amino-acid chain: Ribosomal RNA small subunit methyltransferase G (194 aa).

S-adenosyl-L-methionine contacts are provided by residues glycine 70, tyrosine 75, valine 121–glutamate 122, and arginine 135.

The protein belongs to the methyltransferase superfamily. RNA methyltransferase RsmG family.

The protein resides in the cytoplasm. The catalysed reaction is guanosine(527) in 16S rRNA + S-adenosyl-L-methionine = N(7)-methylguanosine(527) in 16S rRNA + S-adenosyl-L-homocysteine. Its function is as follows. Specifically methylates the N7 position of guanine in position 527 of 16S rRNA. This Aliarcobacter butzleri (strain RM4018) (Arcobacter butzleri) protein is Ribosomal RNA small subunit methyltransferase G.